The chain runs to 447 residues: ATP-dependent protease ATPase subunit HslU (447 aa).

Residues Ile-17, 59 to 64, Asp-256, Glu-321, and Arg-393 each bind ATP; that span reads GVGKTE.

This sequence belongs to the ClpX chaperone family. HslU subfamily. A double ring-shaped homohexamer of HslV is capped on each side by a ring-shaped HslU homohexamer. The assembly of the HslU/HslV complex is dependent on binding of ATP.

Its subcellular location is the cytoplasm. Its function is as follows. ATPase subunit of a proteasome-like degradation complex; this subunit has chaperone activity. The binding of ATP and its subsequent hydrolysis by HslU are essential for unfolding of protein substrates subsequently hydrolyzed by HslV. HslU recognizes the N-terminal part of its protein substrates and unfolds these before they are guided to HslV for hydrolysis. In Pseudomonas putida (strain GB-1), this protein is ATP-dependent protease ATPase subunit HslU.